Here is a 193-residue protein sequence, read N- to C-terminus: Sarcoplasmic calcium-binding protein (193 aa).

EF-hand domains lie at 16 to 40, 57 to 92, and 101 to 136; these read MYDI…NTLI, IMSN…LCCG, and CFKT…RSAF. Asp-18, Asp-20, Asn-22, Tyr-24, Asp-29, Asp-70, Asn-72, Asp-74, Gln-76, Glu-81, Asp-114, Asn-116, Asp-118, and Glu-125 together coordinate Ca(2+).

In terms of assembly, monomer and dimer. In terms of tissue distribution, skeletal muscle (at protein level).

Like parvalbumins, SCPs seem to be more abundant in fast contracting muscles, but no functional relationship can be established from this distribution. This chain is Sarcoplasmic calcium-binding protein, found in Scylla paramamosain (Mud crab).